The primary structure comprises 84 residues: Exodeoxyribonuclease 7 small subunit (84 aa).

Belongs to the XseB family. In terms of assembly, heterooligomer composed of large and small subunits.

It is found in the cytoplasm. It catalyses the reaction Exonucleolytic cleavage in either 5'- to 3'- or 3'- to 5'-direction to yield nucleoside 5'-phosphates.. Bidirectionally degrades single-stranded DNA into large acid-insoluble oligonucleotides, which are then degraded further into small acid-soluble oligonucleotides. This is Exodeoxyribonuclease 7 small subunit from Herminiimonas arsenicoxydans.